Consider the following 533-residue polypeptide: WD repeat-containing protein JIP5 (533 aa).

5 WD repeats span residues 26–67 (NYSD…EKQS), 84–130 (GKVS…GSCR), 176–215 (NSND…GSKL), 264–309 (NQDD…FMDQ), and 372–409 (GAAD…EIAL). Composition is skewed to acidic residues over residues 408–428 (ALDE…EDDL) and 437–452 (ASDE…EDEK). The disordered stretch occupies residues 408–533 (ALDESDDSDD…EHGIRRFDDL (126 aa)). Composition is skewed to basic and acidic residues over residues 453-463 (EDKPVKIDHPL) and 521-533 (QKHE…FDDL).

The protein belongs to the WD repeat WDR55 family.

The protein localises to the nucleus. Its subcellular location is the nucleolus. In Scheffersomyces stipitis (strain ATCC 58785 / CBS 6054 / NBRC 10063 / NRRL Y-11545) (Yeast), this protein is WD repeat-containing protein JIP5 (JIP5).